The primary structure comprises 470 residues: 1-deoxy-D-xylulose 5-phosphate reductoisomerase, chloroplastic (470 aa).

Residues T83, G84, S85, I86, G109, N111, and N197 each coordinate NADPH. K198 serves as a coordination point for 1-deoxy-D-xylulose 5-phosphate. An NADPH-binding site is contributed by E199. D223 provides a ligand contact to Mn(2+). S224, E225, S249, and H272 together coordinate 1-deoxy-D-xylulose 5-phosphate. Residue E225 participates in Mn(2+) binding. G278 is an NADPH binding site. Residues S285, N290, K291, and E294 each coordinate 1-deoxy-D-xylulose 5-phosphate. Position 294 (E294) interacts with Mn(2+).

The protein belongs to the DXR family. Mn(2+) is required as a cofactor. Requires Mg(2+) as cofactor.

It is found in the plastid. It localises to the chloroplast. The enzyme catalyses 2-C-methyl-D-erythritol 4-phosphate + NADP(+) = 1-deoxy-D-xylulose 5-phosphate + NADPH + H(+). The protein operates within isoprenoid biosynthesis; isopentenyl diphosphate biosynthesis via DXP pathway; isopentenyl diphosphate from 1-deoxy-D-xylulose 5-phosphate: step 1/6. Functionally, catalyzes the NADPH-dependent rearrangement and reduction of 1-deoxy-D-xylulose-5-phosphate (DXP) to 2-C-methyl-D-erythritol 4-phosphate (MEP). This chain is 1-deoxy-D-xylulose 5-phosphate reductoisomerase, chloroplastic (DXR), found in Mentha piperita (Peppermint).